Here is a 362-residue protein sequence, read N- to C-terminus: GMP reductase (362 aa).

NADP(+)-binding positions include 26-27 (SR), lysine 78, 129-131 (DVA), and 180-181 (IG). K(+) is bound by residues glycine 181, glycine 183, and cysteine 186. Catalysis depends on cysteine 186, which acts as the Thioimidate intermediate. Threonine 188 (proton donor/acceptor) is an active-site residue. Residue arginine 189 participates in K(+) binding. GMP-binding positions include 219-221 (DGG), 242-243 (GG), 268-270 (GMS), and 286-290 (RASEG). Residues methionine 269, 285 to 286 (YR), and 314 to 317 (STCT) each bind NADP(+).

It belongs to the IMPDH/GMPR family.

The catalysed reaction is IMP + NH4(+) + NADP(+) = GMP + NADPH + 2 H(+). Functionally, catalyzes the irreversible NADPH-dependent deamination of GMP to IMP. It functions in the conversion of nucleobase, nucleoside and nucleotide derivatives of G to A nucleotides, and in maintaining the intracellular balance of A and G nucleotides. This Phytophthora infestans (Potato late blight agent) protein is GMP reductase.